A 192-amino-acid polypeptide reads, in one-letter code: uncharacterized protein (192 aa).

Residues 29 to 160 (QRQAAVLIPV…PLDVYRRGNS (132 aa)) form the Nudix hydrolase domain. A Nudix box motif is present at residues 67 to 89 (GAVDSTDASLIAAALREAQEEVA). Residues E83 and E87 each coordinate Mg(2+).

Belongs to the Nudix hydrolase family. PCD1 subfamily. The cofactor is Mn(2+). Mg(2+) is required as a cofactor.

In terms of biological role, probably mediates the hydrolysis of some nucleoside diphosphate derivatives. This is an uncharacterized protein from Salmonella dublin (strain CT_02021853).